We begin with the raw amino-acid sequence, 279 residues long: Urease accessory protein UreD (279 aa).

Belongs to the UreD family. In terms of assembly, ureD, UreF and UreG form a complex that acts as a GTP-hydrolysis-dependent molecular chaperone, activating the urease apoprotein by helping to assemble the nickel containing metallocenter of UreC. The UreE protein probably delivers the nickel.

It is found in the cytoplasm. Functionally, required for maturation of urease via the functional incorporation of the urease nickel metallocenter. This Streptococcus thermophilus (strain CNRZ 1066) protein is Urease accessory protein UreD.